Reading from the N-terminus, the 538-residue chain is Potassium channel subfamily K member 10 (538 aa).

Residues 1 to 71 (MFFLYTDFFL…GLQTVMKWKT (71 aa)) are Cytoplasmic-facing. The chain crosses the membrane as a helical span at residues 72-92 (VVAIFVVVVVYLVTGGLVFRA). Asn-144, Asn-147, and Asn-148 each carry an N-linked (GlcNAc...) asparagine glycan. An intramembrane region (pore-forming) is located at residues 154–180 (LGSAFFFAGTVITTIGYGNIAPSTEGG). Residues Thr-167, Ile-168, Gly-169, and Tyr-170 each contribute to the K(+) site. Residues 167–172 (TIGYGN) are selectivity filter 1. A helical membrane pass occupies residues 182–202 (IFCILYAIFGIPLFGFLLAGI). The Cytoplasmic portion of the chain corresponds to 203 to 233 (GDQLGTIFGKSIARVEKVFRKKQVSQTKIRV). The chain crosses the membrane as a helical span at residues 234–254 (ISTILFILAGCIVFVTIPAVI). Positions 263 to 294 (ALESIYFVVVTLTTVGFGDFVAGGNAGINYRE) form an intramembrane region, pore-forming. 4 residues coordinate K(+): Thr-276, Val-277, Gly-278, and Phe-279. Residues 276–281 (TVGFGD) form a selectivity filter 2 region. The chain crosses the membrane as a helical span at residues 299-319 (LVWFWILVGLAYFAAVLSMIG). Residues 320–538 (DWLRVLSKKT…ENNSLLEDRN (219 aa)) are Cytoplasmic-facing. Residues 412-421 (SQESINNRPN) show a composition bias toward polar residues. Disordered regions lie at residues 412–443 (SQES…EDNI) and 510–538 (QHAE…EDRN). Residues 522–538 (DTKDREPENNSLLEDRN) are compositionally biased toward basic and acidic residues.

It belongs to the two pore domain potassium channel (TC 1.A.1.8) family. As to quaternary structure, homodimer; disulfide-linked. Forms heterodimers with other 2-pore domain K(+) channel subunits, such as KCNK2, KCNK4 and KCNK18. Abundantly expressed in pancreas and kidney and to a lower level in brain, testis, colon, and small intestine. In brain, mainly expressed in cerebellum, occipital lobe, putamen, and thalamus. No expression is detected in amygdala and spinal cord. In terms of tissue distribution, strongly expressed in kidney (primarily in the proximal tubule) and pancreas. As to expression, abundantly expressed in brain.

Its subcellular location is the cell membrane. It catalyses the reaction K(+)(in) = K(+)(out). The catalysed reaction is Rb(+)(in) = Rb(+)(out). The enzyme catalyses Cs(+)(in) = Cs(+)(out). Activated by various stimuli including acidic pH, anesthetics chloroform, halothane and isoflurane, mechanical stretch, lipids such as arachidonic, docosahexaenoic and linoleic polyunsaturated fatty acids and lysophosphatidylcholine and lysophosphatidylinositol lysophospholipids. Inhibited by norfluoxetine, the active metabolite of antidepressant fluoxetine (Prozac). Its function is as follows. K(+) channel that conducts voltage-dependent outward rectifying currents upon membrane depolarization. Voltage sensing is coupled to K(+) electrochemical gradient in an 'ion flux gating' mode where outward but not inward ion flow opens the gate. Converts to voltage-independent 'leak' conductance mode upon stimulation by various stimuli including mechanical membrane stretch, acidic pH, heat and lipids. Homo- and heterodimerizes to form functional channels with distinct regulatory and gating properties. In trigeminal ganglia sensory neurons, the heterodimer of KCNK10/TREK-2 and KCNK18/TRESK inhibits neuronal firing and neurogenic inflammation by stabilizing the resting membrane potential at K(+) equilibrium potential as well as by regulating the threshold of action potentials and the spike frequency. Permeable to other monovalent ions such as Rb(+) and Cs(+). This is Potassium channel subfamily K member 10 from Homo sapiens (Human).